Consider the following 338-residue polypeptide: Anthocyanidin reductase ((2S)-flavan-3-ol-forming) (338 aa).

Residues 18–21 (TGFV), Lys-48, 87–90 (VATP), and Tyr-168 each bind NADP(+).

This sequence belongs to the NAD(P)-dependent epimerase/dehydratase family. Dihydroflavonol-4-reductase subfamily.

It catalyses the reaction a (2S,3R)-flavan-3-ol + 2 NADP(+) = an anthocyanidin with a 3-hydroxy group + 2 NADPH + 2 H(+). It carries out the reaction a (2S,3S)-flavan-3-ol + 2 NADP(+) = an anthocyanidin with a 3-hydroxy group + 2 NADPH + 2 H(+). It participates in secondary metabolite biosynthesis; flavonoid biosynthesis. In terms of biological role, produces the terminal flavan-3-ol monomers required for the formation of proanthocyanidins or condensed tannins in leaves and flowers, as well as in the skin and seeds of developing berries. Behaves as a reductase and as a C-3 epimerase. Catalyzes the double reduction of anthocyanidins, producing a mixture of (2S,3S)- and (2S,3R)-flavan-3-ols. The enzyme catalyzes sequential hydride transfers to C-2 and C-4, respectively and epimerization at C-3 is achieved by tautomerization that occurs between the two hydride transfers. Converts cyanidin, pelargonidin and delphinidin into catechin and epicatechin, afzelechin and epiafzelechin, and gallocatechin and epigallocatechin respectively. The sequence is that of Anthocyanidin reductase ((2S)-flavan-3-ol-forming) from Vitis vinifera (Grape).